A 283-amino-acid polypeptide reads, in one-letter code: Bifunctional protein FolD (283 aa).

NADP(+)-binding positions include 166–168 (GRS), S191, and I232.

It belongs to the tetrahydrofolate dehydrogenase/cyclohydrolase family. Homodimer.

The enzyme catalyses (6R)-5,10-methylene-5,6,7,8-tetrahydrofolate + NADP(+) = (6R)-5,10-methenyltetrahydrofolate + NADPH. It catalyses the reaction (6R)-5,10-methenyltetrahydrofolate + H2O = (6R)-10-formyltetrahydrofolate + H(+). It functions in the pathway one-carbon metabolism; tetrahydrofolate interconversion. Its function is as follows. Catalyzes the oxidation of 5,10-methylenetetrahydrofolate to 5,10-methenyltetrahydrofolate and then the hydrolysis of 5,10-methenyltetrahydrofolate to 10-formyltetrahydrofolate. In Rickettsia bellii (strain RML369-C), this protein is Bifunctional protein FolD.